The following is a 762-amino-acid chain: MSNVDISNDGFIGLDYDSRNYLQPQSWPVAVDHQASHRAEGARDISPLQTSGHAFEQSVAQDPNLMVDWQFQHMQPHLQYSHEEASSAPQFTTASYGMPIHSSPIDLISGTPQGPLSGSLLDGPYLPLSAPVDMVPFPYQDLQSDLMAFPSDGLAHGLPEIPSYAAPQNVIDSSSPADTYLEVRSLTSSSSDNGWSTIEPRRSHEYFPDQGFFINPTQTLHDRSLSESSYSTSYGSFVEISNPVNSPSSDTNFDAAFNNTMTRRVSFDHTSHGSQSPTAVSPVAIVRPIPVPMKKPSSPTRSTGSSSSTSPPTRKPSRKSPIAAKTAETKVRKQSQNGKPETEKRVGKRKGPLKPDQRKQASEIRKLRACLRCKFLKKTCDKGEPCAGCQPSHARLWQVPCTRIDIKEIGYFMKDWKADYERHISLGFSVGNIKGFSEHERTLFITHGYGQILPINAREVYVHNDQCFNVDWVETYNRGPTKYEVETAKLSAGMEGISHAMLSDYLDRHIDGNGTFEKFVDDYFEGTPFLTQMLKTAFRFYYRTKMPVIRKALKLIVAYNLTLHITLVEGLGEEDGLLGKVDVEGSKFKGKTLAPVMINFQIKCAMANMWRELQKDVLEELSSLYSSVYSGEKLKNWPTIFILASILLAVWEEMQFDCHYRTRDPAAVEKFCNDMETTPVGVIVGLFQAISQKLPAFTEWETQKHHHLLHSNPDVCSAMTEVRQHVTQYESYLRSRSSSKFNPKDFDCLSNKFVSRLVVRAN.

The interval Phe267–Ala361 is disordered. The span at Lys294 to Pro312 shows a compositional bias: low complexity. The zn(2)-C6 fungal-type DNA-binding region spans Cys370–Cys401.

It localises to the nucleus. Transcription factor that regulates conidiation as well as kojic acid production, likely by negatively controlling kojR and kojA expression. In Aspergillus oryzae (strain ATCC 42149 / RIB 40) (Yellow koji mold), this protein is Transcription factor kpeA.